Here is a 140-residue protein sequence, read N- to C-terminus: Large ribosomal subunit protein uL11 (140 aa).

This sequence belongs to the universal ribosomal protein uL11 family. Part of the ribosomal stalk of the 50S ribosomal subunit. Interacts with L10 and the large rRNA to form the base of the stalk. L10 forms an elongated spine to which L12 dimers bind in a sequential fashion forming a multimeric L10(L12)X complex. One or more lysine residues are methylated.

Forms part of the ribosomal stalk which helps the ribosome interact with GTP-bound translation factors. This Lawsonia intracellularis (strain PHE/MN1-00) protein is Large ribosomal subunit protein uL11.